Here is a 508-residue protein sequence, read N- to C-terminus: Anthranilate synthase component 1 (508 aa).

L-tryptophan contacts are provided by residues Ser-49 and 282–284 (PYM). 317-318 (GT) is a binding site for chorismate. Glu-344 is a binding site for Mg(2+). Chorismate is bound by residues Tyr-432, Arg-452, 466 to 468 (GAG), and Gly-468. Mg(2+) is bound at residue Glu-481.

This sequence belongs to the anthranilate synthase component I family. In terms of assembly, heterotetramer consisting of two non-identical subunits: a beta subunit (TrpG) and a large alpha subunit (TrpE). Mg(2+) serves as cofactor.

It carries out the reaction chorismate + L-glutamine = anthranilate + pyruvate + L-glutamate + H(+). It participates in amino-acid biosynthesis; L-tryptophan biosynthesis; L-tryptophan from chorismate: step 1/5. Its activity is regulated as follows. Feedback inhibited by tryptophan. Part of a heterotetrameric complex that catalyzes the two-step biosynthesis of anthranilate, an intermediate in the biosynthesis of L-tryptophan. In the first step, the glutamine-binding beta subunit (TrpG) of anthranilate synthase (AS) provides the glutamine amidotransferase activity which generates ammonia as a substrate that, along with chorismate, is used in the second step, catalyzed by the large alpha subunit of AS (TrpE) to produce anthranilate. In the absence of TrpG, TrpE can synthesize anthranilate directly from chorismate and high concentrations of ammonia. This chain is Anthranilate synthase component 1 (trpE), found in Geobacillus stearothermophilus (Bacillus stearothermophilus).